A 153-amino-acid polypeptide reads, in one-letter code: Ribosome-binding factor A (153 aa).

The interval 116–153 is disordered; that stretch reads DAQVAEQAQGAQYAAGEDAYRTPSDEDDAEGPESAPRV. Low complexity predominate over residues 119 to 132; sequence VAEQAQGAQYAAGE.

The protein belongs to the RbfA family. In terms of assembly, monomer. Binds 30S ribosomal subunits, but not 50S ribosomal subunits or 70S ribosomes.

It is found in the cytoplasm. Functionally, one of several proteins that assist in the late maturation steps of the functional core of the 30S ribosomal subunit. Associates with free 30S ribosomal subunits (but not with 30S subunits that are part of 70S ribosomes or polysomes). Required for efficient processing of 16S rRNA. May interact with the 5'-terminal helix region of 16S rRNA. The polypeptide is Ribosome-binding factor A (Kocuria rhizophila (strain ATCC 9341 / DSM 348 / NBRC 103217 / DC2201)).